The sequence spans 316 residues: MSKRKVAIIGSGNIGTDLMIKILRHDQHLEMAVMVGIDPQSDGLARARRMGVATTHEGVIGLMNMPEFADIDIVFDATSAGAHVKNDAALREAKPDIRLIDLTPAAIGPYCVPVVNLEENVDQLNVNMVTCGGQATIPMVAAVSRVVRVHYAEIIASIASKSAGPGTRANIDEFTETTSRAIEVVGGAAKGKAIIVLNPAEPPLMMRDTVYVLSDEASQDDIEASINEMAEAVQAYVPGYRLKQRVQFEVIPQDKPVNLPGVGQFSGLKTAVWLEVEGAAHYLPAYAGNLDIMTSSALATAEKMAQSLARKAGEAA.

11-14 (SGNI) lines the NAD(+) pocket. Catalysis depends on Cys-131, which acts as the Acyl-thioester intermediate. Residues 162–170 (SAGPGTRAN) and Asn-289 contribute to the NAD(+) site.

Belongs to the acetaldehyde dehydrogenase family. Interacts with MhpE.

It carries out the reaction acetaldehyde + NAD(+) + CoA = acetyl-CoA + NADH + H(+). Its pathway is aromatic compound metabolism; 3-phenylpropanoate degradation. Functionally, catalyzes the conversion of acetaldehyde to acetyl-CoA, using NAD(+) and coenzyme A. Is the final enzyme in the meta-cleavage pathway for the degradation of aromatic compounds. In Escherichia coli O157:H7, this protein is Acetaldehyde dehydrogenase.